The following is a 232-amino-acid chain: Large ribosomal subunit protein uL1 (232 aa).

Belongs to the universal ribosomal protein uL1 family. In terms of assembly, part of the 50S ribosomal subunit.

In terms of biological role, binds directly to 23S rRNA. The L1 stalk is quite mobile in the ribosome, and is involved in E site tRNA release. Its function is as follows. Protein L1 is also a translational repressor protein, it controls the translation of the L11 operon by binding to its mRNA. This is Large ribosomal subunit protein uL1 from Stenotrophomonas maltophilia (strain R551-3).